Consider the following 96-residue polypeptide: Co-chaperonin GroES (96 aa).

The protein belongs to the GroES chaperonin family. In terms of assembly, heptamer of 7 subunits arranged in a ring. Interacts with the chaperonin GroEL.

The protein resides in the cytoplasm. Its function is as follows. Together with the chaperonin GroEL, plays an essential role in assisting protein folding. The GroEL-GroES system forms a nano-cage that allows encapsulation of the non-native substrate proteins and provides a physical environment optimized to promote and accelerate protein folding. GroES binds to the apical surface of the GroEL ring, thereby capping the opening of the GroEL channel. This chain is Co-chaperonin GroES, found in Citrifermentans bemidjiense (strain ATCC BAA-1014 / DSM 16622 / JCM 12645 / Bem) (Geobacter bemidjiensis).